The following is a 320-amino-acid chain: Transaldolase (320 aa).

Lys126 acts as the Schiff-base intermediate with substrate in catalysis.

It belongs to the transaldolase family. Type 1 subfamily. As to quaternary structure, homodimer.

It is found in the cytoplasm. The enzyme catalyses D-sedoheptulose 7-phosphate + D-glyceraldehyde 3-phosphate = D-erythrose 4-phosphate + beta-D-fructose 6-phosphate. It functions in the pathway carbohydrate degradation; pentose phosphate pathway; D-glyceraldehyde 3-phosphate and beta-D-fructose 6-phosphate from D-ribose 5-phosphate and D-xylulose 5-phosphate (non-oxidative stage): step 2/3. Functionally, transaldolase is important for the balance of metabolites in the pentose-phosphate pathway. This chain is Transaldolase, found in Bordetella pertussis (strain Tohama I / ATCC BAA-589 / NCTC 13251).